The following is a 98-amino-acid chain: NADH-ubiquinone oxidoreductase chain 4L (98 aa).

A run of 3 helical transmembrane segments spans residues 1–21 (MSVVYINIFLAFILSFMGLLV), 30–50 (LLCLEGMMLSLFVMMTITVLT), and 61–81 (IILLVFAACEAALGLSLLVMI).

The protein belongs to the complex I subunit 4L family. As to quaternary structure, core subunit of respiratory chain NADH dehydrogenase (Complex I) which is composed of 45 different subunits.

It is found in the mitochondrion inner membrane. It catalyses the reaction a ubiquinone + NADH + 5 H(+)(in) = a ubiquinol + NAD(+) + 4 H(+)(out). Functionally, core subunit of the mitochondrial membrane respiratory chain NADH dehydrogenase (Complex I) which catalyzes electron transfer from NADH through the respiratory chain, using ubiquinone as an electron acceptor. Part of the enzyme membrane arm which is embedded in the lipid bilayer and involved in proton translocation. The sequence is that of NADH-ubiquinone oxidoreductase chain 4L (MT-ND4L) from Lontra canadensis (North American river otter).